A 206-amino-acid polypeptide reads, in one-letter code: MRFTVAIDGPAAAGKGTISRAVATHFRFAHLDTGLLYRAVGAKVTEGADPVAAAEGLDLADLARDDLRSAEAGQAASRVAALPEVRAALVAFQRSFARREGGAVLDGRDIGTVICPEAEVKLFVTASDEERARRRWLELAAKGGTQSEAEILADLRERDRRDREREAAPLRPAPDALLLDTTELTIDAAVNKAIEAIELRQAQGRE.

9 to 17 (GPAAAGKGT) contacts ATP. The segment covering 155 to 168 (LRERDRRDREREAA) has biased composition (basic and acidic residues). Residues 155-174 (LRERDRRDREREAAPLRPAP) are disordered.

Belongs to the cytidylate kinase family. Type 1 subfamily.

It is found in the cytoplasm. The catalysed reaction is CMP + ATP = CDP + ADP. The enzyme catalyses dCMP + ATP = dCDP + ADP. The sequence is that of Cytidylate kinase from Cereibacter sphaeroides (strain KD131 / KCTC 12085) (Rhodobacter sphaeroides).